The primary structure comprises 513 residues: ATP synthase subunit alpha (513 aa).

169–176 (GDRQTGKT) provides a ligand contact to ATP.

The protein belongs to the ATPase alpha/beta chains family. As to quaternary structure, F-type ATPases have 2 components, CF(1) - the catalytic core - and CF(0) - the membrane proton channel. CF(1) has five subunits: alpha(3), beta(3), gamma(1), delta(1), epsilon(1). CF(0) has three main subunits: a(1), b(2) and c(9-12). The alpha and beta chains form an alternating ring which encloses part of the gamma chain. CF(1) is attached to CF(0) by a central stalk formed by the gamma and epsilon chains, while a peripheral stalk is formed by the delta and b chains.

The protein resides in the cell inner membrane. The enzyme catalyses ATP + H2O + 4 H(+)(in) = ADP + phosphate + 5 H(+)(out). Produces ATP from ADP in the presence of a proton gradient across the membrane. The alpha chain is a regulatory subunit. The protein is ATP synthase subunit alpha of Actinobacillus succinogenes (strain ATCC 55618 / DSM 22257 / CCUG 43843 / 130Z).